The primary structure comprises 497 residues: Probable zinc metalloprotease TRV_03476 (497 aa).

An N-terminal signal peptide occupies residues 1-24 (MRFLISSLLSGLALLTSLHAFVLA). 2 N-linked (GlcNAc...) asparagine glycosylation sites follow: N100 and N121. Zn(2+)-binding residues include H171, D191, and E227. An N-linked (GlcNAc...) asparagine glycan is attached at N242. A Zn(2+)-binding site is contributed by D254. The Fibronectin type-III domain occupies 411–497 (MPRNVRVNTN…ERGVAVLPFP (87 aa)). N424 is a glycosylation site (N-linked (GlcNAc...) asparagine).

This sequence belongs to the peptidase M28 family. M28B subfamily. The cofactor is Zn(2+).

Its subcellular location is the secreted. This Trichophyton verrucosum (strain HKI 0517) protein is Probable zinc metalloprotease TRV_03476.